A 449-amino-acid polypeptide reads, in one-letter code: 23S rRNA (uracil(1939)-C(5))-methyltransferase RlmD (449 aa).

The TRAM domain maps to 15–73 (KAIPAKNLTVTVTSLDPFGQGVARHEGKTVFVTGVLPGEQAEVQLTEDKRQFSHAKLKR). [4Fe-4S] cluster-binding residues include Cys86, Cys92, Cys95, and Cys173. Gln276, Phe305, Asn310, Glu326, Asn353, and Asp374 together coordinate S-adenosyl-L-methionine. Cys400 acts as the Nucleophile in catalysis.

The protein belongs to the class I-like SAM-binding methyltransferase superfamily. RNA M5U methyltransferase family. RlmD subfamily.

It catalyses the reaction uridine(1939) in 23S rRNA + S-adenosyl-L-methionine = 5-methyluridine(1939) in 23S rRNA + S-adenosyl-L-homocysteine + H(+). Its function is as follows. Catalyzes the formation of 5-methyl-uridine at position 1939 (m5U1939) in 23S rRNA. The sequence is that of 23S rRNA (uracil(1939)-C(5))-methyltransferase RlmD from Pectobacterium carotovorum subsp. carotovorum (strain PC1).